A 798-amino-acid chain; its full sequence is ATP-dependent RecD2 DNA helicase (798 aa).

370-374 (GTGKT) is an ATP binding site.

The protein belongs to the RecD family. RecD2 subfamily. As to quaternary structure, interacts with SSB (sbbA).

Its subcellular location is the cytoplasm. The protein resides in the nucleoid. The enzyme catalyses Couples ATP hydrolysis with the unwinding of duplex DNA at the replication fork by translocating in the 5'-3' direction. This creates two antiparallel DNA single strands (ssDNA). The leading ssDNA polymer is the template for DNA polymerase III holoenzyme which synthesizes a continuous strand.. The catalysed reaction is ATP + H2O = ADP + phosphate + H(+). Its function is as follows. In vivo may favor replication restart by preventing RecA from binding to blocked replication forks, avoiding unnecessary recombination during replication restart. Acts as a negative modulator of the RecA-ssDNA filament, may dissasemble RecA threads, can act as both a positive and negative regulator of strand exchange. Probably stabilizes or aids normal replication fork progression, is important for survival after treatment with DNA-damaging agents that can result in replication fork stress. Overcomes the inhibition of replication restart by RecA/RecO, probably by displacing RecA. Increasing levels inhibit PriA-dependent DNA replication initiation (but have little effect on ongoing replication) in vitro; may act by disturbing SsbA assembly. Probably has a role in recombinational DNA repair. Does not seem to contribute to mismatch repair. Has 5'-3' helicase activity that is probably ATP-dependent. The sequence is that of ATP-dependent RecD2 DNA helicase from Bacillus subtilis (strain 168).